Reading from the N-terminus, the 21-residue chain is Granulitoxin (21 aa).

The segment at 1-21 is disordered; the sequence is AKTGILDSDGPTVAGNSLSGT.

The protein resides in the secreted. The protein localises to the nematocyst. Its function is as follows. Injection into mice produces severe neurotoxic effects such as circular movements, aggressive behavior, dyspnea, tonic-clonic convulsion and death. In Bunodosoma cangicum (Sea anemone), this protein is Granulitoxin.